A 495-amino-acid polypeptide reads, in one-letter code: Regulator of G-protein signaling 7 (495 aa).

The DEP domain maps to 37-112 (EKNGIPIRTV…DDGTFYRFQT (76 aa)). Residues S229 and S241 each carry the phosphoserine modification. The tract at residues 235–256 (NDIRSHSPTHTPTPETKPPTED) is disordered. T243 carries the post-translational modification Phosphothreonine. A G protein gamma domain is found at 255–316 (EDELQQQIKY…LSDDTTFWEL (62 aa)). In terms of domain architecture, RGS spans 333–448 (GMDEALKDPV…IRSSAYQELL (116 aa)). S434 carries the phosphoserine modification.

In terms of assembly, interacts with GNB5, forming the RGS7-GNB5 complex. Interacts with GPR158; promotes the GTPase activator activity of the RGS7-GNB5 complex in absence of glycine, in contrast GTPase activator activity of the RGS7-GNB5 complex is inhibited in presence of glycine. Interacts with GPR179. Interacts with PKD1; this prevents rapid proteasomal degradation. Interacts with RGS7BP, leading to regulate the subcellular location of the heterodimer formed with GNB5. Interacts (phosphorylated form) with 14-3-3 protein YWHAQ. Interacts with SNAPIN. Interacts with GNAI1. Interacts with GNAO1, GNAI3 and GNAZ. Post-translationally, palmitoylated. In terms of processing, ubiquitinated, leading to rapid proteasomal degradation. Phosphorylation and subsequent interaction with 14-3-3 proteins inhibits GAP activity.

Its subcellular location is the cytoplasm. It localises to the cytosol. The protein resides in the cell membrane. The protein localises to the membrane. In terms of biological role, GTPase activator component of the RGS7-GNB5 complex that regulates G protein-coupled receptor signaling cascades. The RGS7-GNB5 complex acts as an inhibitor signal transduction by promoting the GTPase activity of G protein alpha subunits, such as GNAO1, thereby driving them into their inactive GDP-bound form. May play a role in synaptic vesicle exocytosis. Glycine-dependent regulation of the RGS7-GNB5 complex by GPR158 affects mood and cognition via its ability to regulate neuronal excitability in L2/L3 pyramidal neurons of the prefrontal cortex. Modulates the activity of potassium channels that are activated by GNAO1 in response to muscarinic acetylcholine receptor M2/CHRM2 signaling. The polypeptide is Regulator of G-protein signaling 7 (RGS7) (Homo sapiens (Human)).